The primary structure comprises 369 residues: Phosphate acyltransferase (369 aa).

Positions 342-369 are disordered; that stretch reads ASRAPNSQTAGGERAAAVPQSAQLRMDS.

This sequence belongs to the PlsX family. Homodimer. Probably interacts with PlsY.

The protein localises to the cytoplasm. The enzyme catalyses a fatty acyl-[ACP] + phosphate = an acyl phosphate + holo-[ACP]. The protein operates within lipid metabolism; phospholipid metabolism. Functionally, catalyzes the reversible formation of acyl-phosphate (acyl-PO(4)) from acyl-[acyl-carrier-protein] (acyl-ACP). This enzyme utilizes acyl-ACP as fatty acyl donor, but not acyl-CoA. In Methylocella silvestris (strain DSM 15510 / CIP 108128 / LMG 27833 / NCIMB 13906 / BL2), this protein is Phosphate acyltransferase.